Reading from the N-terminus, the 350-residue chain is Biotin synthase (350 aa).

Residues 1–13 (MVTQAATRPSNDA) show a composition bias toward polar residues. Residues 1–20 (MVTQAATRPSNDAGQDGVTE) are disordered. One can recognise a Radical SAM core domain in the interval 71 to 296 (PEVEVEGIIS…RTMLRFAGGR (226 aa)). The [4Fe-4S] cluster site is built by Cys86, Cys90, and Cys93. Residues Cys129, Cys162, Cys221, and Arg291 each coordinate [2Fe-2S] cluster.

The protein belongs to the radical SAM superfamily. Biotin synthase family. Homodimer. The cofactor is [4Fe-4S] cluster. It depends on [2Fe-2S] cluster as a cofactor.

It carries out the reaction (4R,5S)-dethiobiotin + (sulfur carrier)-SH + 2 reduced [2Fe-2S]-[ferredoxin] + 2 S-adenosyl-L-methionine = (sulfur carrier)-H + biotin + 2 5'-deoxyadenosine + 2 L-methionine + 2 oxidized [2Fe-2S]-[ferredoxin]. Its pathway is cofactor biosynthesis; biotin biosynthesis; biotin from 7,8-diaminononanoate: step 2/2. In terms of biological role, catalyzes the conversion of dethiobiotin (DTB) to biotin by the insertion of a sulfur atom into dethiobiotin via a radical-based mechanism. The sequence is that of Biotin synthase from Mycobacterium ulcerans (strain Agy99).